The following is a 105-amino-acid chain: Small ribosomal subunit protein uS14m (105 aa).

This sequence belongs to the universal ribosomal protein uS14 family. As to quaternary structure, component of the mitochondrial small ribosomal subunit (mt-SSU). Mature yeast 74S mitochondrial ribosomes consist of a small (37S) and a large (54S) subunit. The 37S small subunit contains a 15S ribosomal RNA (15S mt-rRNA) and at least 32 different proteins. The 54S large subunit contains a 21S rRNA (21S mt-rRNA) and at least 45 different proteins.

Its subcellular location is the mitochondrion. In terms of biological role, component of the mitochondrial ribosome (mitoribosome), a dedicated translation machinery responsible for the synthesis of mitochondrial genome-encoded proteins, including at least some of the essential transmembrane subunits of the mitochondrial respiratory chain. The mitoribosomes are attached to the mitochondrial inner membrane and translation products are cotranslationally integrated into the membrane. The polypeptide is Small ribosomal subunit protein uS14m (mrp2) (Schizosaccharomyces pombe (strain 972 / ATCC 24843) (Fission yeast)).